We begin with the raw amino-acid sequence, 74 residues long: ATP synthase subunit c (74 aa).

2 helical membrane passes run 8-28 (FIGV…VSNI) and 52-72 (IGAG…MLLI).

The protein belongs to the ATPase C chain family. In terms of assembly, F-type ATPases have 2 components, F(1) - the catalytic core - and F(0) - the membrane proton channel. F(1) has five subunits: alpha(3), beta(3), gamma(1), delta(1), epsilon(1). F(0) has three main subunits: a(1), b(2) and c(10-14). The alpha and beta chains form an alternating ring which encloses part of the gamma chain. F(1) is attached to F(0) by a central stalk formed by the gamma and epsilon chains, while a peripheral stalk is formed by the delta and b chains.

The protein localises to the cell inner membrane. Its function is as follows. F(1)F(0) ATP synthase produces ATP from ADP in the presence of a proton or sodium gradient. F-type ATPases consist of two structural domains, F(1) containing the extramembraneous catalytic core and F(0) containing the membrane proton channel, linked together by a central stalk and a peripheral stalk. During catalysis, ATP synthesis in the catalytic domain of F(1) is coupled via a rotary mechanism of the central stalk subunits to proton translocation. Key component of the F(0) channel; it plays a direct role in translocation across the membrane. A homomeric c-ring of between 10-14 subunits forms the central stalk rotor element with the F(1) delta and epsilon subunits. This chain is ATP synthase subunit c, found in Rickettsia bellii (strain RML369-C).